A 28-amino-acid polypeptide reads, in one-letter code: Humanin-like 4 (28 aa).

The protein belongs to the humanin family. In terms of tissue distribution, highly expressed in testis. Also expressed in kidney, heart, skeletal muscles and brain.

It is found in the secreted. The protein resides in the cytoplasm. Plays a role as a neuroprotective and antiapoptotic factor. The chain is Humanin-like 4 from Homo sapiens (Human).